The following is a 285-amino-acid chain: 2-dehydro-3-deoxyphosphooctonate aldolase (285 aa).

Belongs to the KdsA family.

Its subcellular location is the cytoplasm. It catalyses the reaction D-arabinose 5-phosphate + phosphoenolpyruvate + H2O = 3-deoxy-alpha-D-manno-2-octulosonate-8-phosphate + phosphate. The protein operates within carbohydrate biosynthesis; 3-deoxy-D-manno-octulosonate biosynthesis; 3-deoxy-D-manno-octulosonate from D-ribulose 5-phosphate: step 2/3. Its pathway is bacterial outer membrane biogenesis; lipopolysaccharide biosynthesis. This chain is 2-dehydro-3-deoxyphosphooctonate aldolase, found in Acinetobacter baumannii (strain SDF).